A 172-amino-acid polypeptide reads, in one-letter code: Crossover junction endodeoxyribonuclease RuvC (172 aa).

Active-site residues include Asp8, Glu67, and Asp139. Residues Asp8, Glu67, and Asp139 each coordinate Mg(2+).

This sequence belongs to the RuvC family. As to quaternary structure, homodimer which binds Holliday junction (HJ) DNA. The HJ becomes 2-fold symmetrical on binding to RuvC with unstacked arms; it has a different conformation from HJ DNA in complex with RuvA. In the full resolvosome a probable DNA-RuvA(4)-RuvB(12)-RuvC(2) complex forms which resolves the HJ. Mg(2+) serves as cofactor.

The protein localises to the cytoplasm. The catalysed reaction is Endonucleolytic cleavage at a junction such as a reciprocal single-stranded crossover between two homologous DNA duplexes (Holliday junction).. Functionally, the RuvA-RuvB-RuvC complex processes Holliday junction (HJ) DNA during genetic recombination and DNA repair. Endonuclease that resolves HJ intermediates. Cleaves cruciform DNA by making single-stranded nicks across the HJ at symmetrical positions within the homologous arms, yielding a 5'-phosphate and a 3'-hydroxyl group; requires a central core of homology in the junction. The consensus cleavage sequence is 5'-(A/T)TT(C/G)-3'. Cleavage occurs on the 3'-side of the TT dinucleotide at the point of strand exchange. HJ branch migration catalyzed by RuvA-RuvB allows RuvC to scan DNA until it finds its consensus sequence, where it cleaves and resolves the cruciform DNA. The chain is Crossover junction endodeoxyribonuclease RuvC from Hahella chejuensis (strain KCTC 2396).